Reading from the N-terminus, the 363-residue chain is dTDP-L-rhamnose 4-epimerase (363 aa).

NAD(+) contacts are provided by residues 18–24, 68–69, and 90–94; these read GGAGFIG, DV, and LAAET. The substrate site is built by Ser-136 and Tyr-191. The NAD(+) site is built by Tyr-191 and Lys-195. Tyr-191 serves as the catalytic Proton acceptor. Asn-220 and Arg-259 together coordinate substrate.

This sequence belongs to the NAD(P)-dependent epimerase/dehydratase family. NAD(+) serves as cofactor.

It carries out the reaction dTDP-6-deoxy-beta-L-talose = dTDP-beta-L-rhamnose. The protein operates within bacterial outer membrane biogenesis; LPS O-antigen biosynthesis. Functionally, catalyzes the interconvertion of dTDP-6-deoxy-L-talose and dTDP-L-rhamnose. The equilibrium is strongly toward dTDP-L-rhamnose. The sequence is that of dTDP-L-rhamnose 4-epimerase (wbiB) from Burkholderia thailandensis (strain ATCC 700388 / DSM 13276 / CCUG 48851 / CIP 106301 / E264).